Here is a 212-residue protein sequence, read N- to C-terminus: Calaxin (212 aa).

3 consecutive EF-hand domains span residues 65 to 100, 101 to 136, and 146 to 181; these read TDDM…FLRG, TLEE…SLLK, and GIKD…ETLL. Asp78, Asp80, Asp82, Cys84, Glu89, Asp114, Asn116, Asp118, Glu125, Asp159, Asp161, Asp163, Lys165, and Asp170 together coordinate Ca(2+).

Component of the outer dynein arm-docking complex along with ODAD1, ODAD2, ODAD3 and ODAD4. In terms of tissue distribution, expressed in trachea multiciliated cells.

The protein resides in the cytoplasm. Its subcellular location is the cytoskeleton. The protein localises to the cilium axoneme. It is found in the cell projection. It localises to the cilium. The protein resides in the flagellum. Its function is as follows. Component of the outer dynein arm-docking complex (ODA-DC) that mediates outer dynein arms (ODA) binding onto the doublet microtubule. Seems to regulate the assembly of both ODAs and their axonemal docking complex onto ciliary microtubules. Regulates ciliary and flagellar motility and is required for cilia-driven determination of body laterality. The chain is Calaxin (CLXN) from Bos taurus (Bovine).